A 496-amino-acid polypeptide reads, in one-letter code: Aminoacetaldehyde dehydrogenase (496 aa).

NADH-binding residues include Leu-166, Trp-168, Lys-192, Ser-246, Thr-249, and Tyr-256. The Proton acceptor role is filled by Glu-268. Cys-269 serves as a coordination point for NADH. Cys-303 acts as the Nucleophile in catalysis. NADH is bound by residues Lys-353 and Glu-398.

This sequence belongs to the aldehyde dehydrogenase family. Homotetramer, formed by two symmetrical dimers.

The catalysed reaction is aminoacetaldehyde + NAD(+) + H2O = glycine + NADH + 2 H(+). It catalyses the reaction 3-aminopropanal + NAD(+) + H2O = beta-alanine + NADH + 2 H(+). Functionally, NAD(+)-dependent aminoaldehyde dehydrogenase highly efficient with protonated aminoacetaldehyde (ACTAL) and 3-aminopropanaldehyde (APAL). Likely participates in a still uncharacterized metabolic pathway present in proteobacteria species, in which ACTAL might be an intermediate, yielding glycine. Highly prefers NAD(+) over NADP(+). Shows very poor activity with acetaldehyde, propanaldehyde, butanaldehyde, pentanaldehyde, dimethylaminoacetaldehyde, trimethylaminoacetaldehyde (betaine aldehyde), trimethylaminobutanaldehyde, short aliphatic hydroxyaldehydes such as 3-hydroxypropanaldehyde and 2-hydroxypropanaldehyde (lactaldehyde), and aromatic aldehydes. This chain is Aminoacetaldehyde dehydrogenase, found in Pseudomonas aeruginosa (strain ATCC 15692 / DSM 22644 / CIP 104116 / JCM 14847 / LMG 12228 / 1C / PRS 101 / PAO1).